Here is a 959-residue protein sequence, read N- to C-terminus: Bifunctional premutilin synthase (959 aa).

Residues 1–542 (MGLSEDLHAR…ALNVPIPRFD (542 aa)) form a class II diterpene cyclase region. A DXDD motif motif is present at residues 309 to 312 (DADM). The active-site For class II diterpene cyclase activity is D311. The interval 543–959 (PASITTLPPI…TANGSNGIHH (417 aa)) is class I diterpene synthase. Catalysis depends on D649, which acts as the For class I diterpene synthase activity. 3 residues coordinate Mg(2+): D649, D653, and N824. Positions 649 to 653 (DDYLD) match the DDXXD motif motif. The disordered stretch occupies residues 931 to 959 (KGANGVKKTNGLTTNGTKATANGSNGIHH). Positions 934–959 (NGVKKTNGLTTNGTKATANGSNGIHH) are enriched in low complexity.

It belongs to the terpene synthase family. The cofactor is Mg(2+).

Its pathway is secondary metabolite biosynthesis; terpenoid biosynthesis. Its function is as follows. Bifunctional premutilin synthase; part of the gene cluster that mediates the biosynthesis of pleuromutilin, a tricyclic diterpene showing antibacterial properties. The geranylgeranyl diphosphate (GGPP) synthase ple4 catalyzes the first step in pleuromutilin biosynthesis. GGPP is then substrate of the premutilin synthase (PS) ple3 to yield premutilin. Premutilin synthase is a bifunctional enzyme composed of the fusion of a class II diterpene cyclase (DTC) and a class I diterpene synthase (DTS), with the corresponding domains and active sites containing characteristic aspartate-rich motifs. GGPP is first converted to mutildienyl-diphosphate (MPP) at the class II DTC site. MPP is subsequently further cyclized at the class I DTS site, followed by a 1,5-hydride shift and addition of water prior to terminating deprotonation, to yield premutilin. The cytochrome P450 monooxygenases ple5 and ple6 hydroxylate premutilin at C-11 and C-3, respectively, producing 11-hydroxypremutilin and 3-hydroxypremutilin. The combination of the actions of both ple5 and ple6 leads to the production of 3,11-dihydroxypremutilin. The short chain dehydrogenase ple7 further converts 3,11-dihydroxypremutilin into mutilin. The acetyltransferase ple2 then acetylates mutilin to produce 14-O-acetylmutilin. Finally, the cytochrome P450 monooxygenase ple1 catalyzes hydroxylation on the alpha position of the acetyl side chain of 14-O-acetylmutilin to yield pleuromutilin. The protein is Bifunctional premutilin synthase of Rhodocybe pseudopiperita (Clitopilus pseudopiperitus).